Reading from the N-terminus, the 83-residue chain is Small ribosomal subunit protein uS17c (83 aa).

Belongs to the universal ribosomal protein uS17 family. In terms of assembly, part of the 30S ribosomal subunit.

It is found in the plastid. The protein resides in the chloroplast. In terms of biological role, one of the primary rRNA binding proteins, it binds specifically to the 5'-end of 16S ribosomal RNA. This is Small ribosomal subunit protein uS17c (rps17) from Porphyra purpurea (Red seaweed).